Consider the following 360-residue polypeptide: Phenylalanine--tRNA ligase alpha subunit (360 aa).

A Mg(2+)-binding site is contributed by Glu260.

The protein belongs to the class-II aminoacyl-tRNA synthetase family. Phe-tRNA synthetase alpha subunit type 1 subfamily. In terms of assembly, tetramer of two alpha and two beta subunits. It depends on Mg(2+) as a cofactor.

It localises to the cytoplasm. It carries out the reaction tRNA(Phe) + L-phenylalanine + ATP = L-phenylalanyl-tRNA(Phe) + AMP + diphosphate + H(+). The polypeptide is Phenylalanine--tRNA ligase alpha subunit (Agrobacterium fabrum (strain C58 / ATCC 33970) (Agrobacterium tumefaciens (strain C58))).